The sequence spans 141 residues: NADH dehydrogenase [ubiquinone] 1 alpha subcomplex subunit 11 (141 aa).

A run of 2 helical transmembrane segments spans residues 21 to 43 (KTYI…RVSL) and 58 to 80 (RYTF…SAQV).

Belongs to the complex I NDUFA11 subunit family. Complex I is composed of 45 different subunits.

The protein localises to the mitochondrion inner membrane. Accessory subunit of the mitochondrial membrane respiratory chain NADH dehydrogenase (Complex I), that is believed not to be involved in catalysis. Complex I functions in the transfer of electrons from NADH to the respiratory chain. The immediate electron acceptor for the enzyme is believed to be ubiquinone. This is NADH dehydrogenase [ubiquinone] 1 alpha subcomplex subunit 11 (Ndufa11) from Mus musculus (Mouse).